We begin with the raw amino-acid sequence, 76 residues long: Large ribosomal subunit protein eL38 (76 aa).

The protein belongs to the eukaryotic ribosomal protein eL38 family.

This is Large ribosomal subunit protein eL38 (RpL38) from Lysiphlebus testaceipes (Greenbugs aphid parastoid).